The primary structure comprises 196 residues: CASP-like protein 2A2 (196 aa).

The Cytoplasmic portion of the chain corresponds to 1–26 (MAQGKESVSVVEMEGSGNGPAVEMRH). A helical transmembrane segment spans residues 27 to 47 (FETLFRLLPVGLCISALVLML). At 48–68 (KSEQSDQYMQLDYSNVDAFRC) the chain is on the extracellular side. Residues 69–89 (LAYANGICAGYSLISAFDSMV) form a helical membrane-spanning segment. Over 90–98 (PVSHHISRS) the chain is Cytoplasmic. A helical membrane pass occupies residues 99-119 (WILFLLDQGITYLMLAGGAVA). Residues 120–148 (TQVLYVAYKGDEKATWEQICGSYGRFCNR) lie on the Extracellular side of the membrane. The helical transmembrane segment at 149 to 169 (AGASVIISFFALVCFLLLSLL) threads the bilayer. At 170 to 196 (SAYRLFSKYDPPIHGGAKLEDQTTAQI) the chain is on the cytoplasmic side.

The protein belongs to the Casparian strip membrane proteins (CASP) family. As to quaternary structure, homodimer and heterodimers.

It is found in the cell membrane. The polypeptide is CASP-like protein 2A2 (Picea sitchensis (Sitka spruce)).